The sequence spans 100 residues: Large ribosomal subunit protein bL28 (100 aa).

The interval 1–21 is disordered; the sequence is MSRVCDITGQGKSFGNKVSHS. The span at 10 to 19 shows a compositional bias: polar residues; that stretch reads QGKSFGNKVS.

This sequence belongs to the bacterial ribosomal protein bL28 family.

The chain is Large ribosomal subunit protein bL28 from Ehrlichia canis (strain Jake).